An 805-amino-acid chain; its full sequence is Phenylalanine--tRNA ligase beta subunit (805 aa).

One can recognise a tRNA-binding domain in the interval 39-148; sequence APPFTGVVVA…AALRPGTDIR (110 aa). The region spanning 399-474 is the B5 domain; it reads PVREPVRMRL…RVYGFERIPD (76 aa). Residues aspartate 452, aspartate 458, glutamate 461, and glutamate 462 each contribute to the Mg(2+) site. The FDX-ACB domain maps to 703-804; it reads SRQPAVVRDL…LVAAHNARQR (102 aa).

This sequence belongs to the phenylalanyl-tRNA synthetase beta subunit family. Type 1 subfamily. As to quaternary structure, tetramer of two alpha and two beta subunits. Mg(2+) serves as cofactor.

Its subcellular location is the cytoplasm. The enzyme catalyses tRNA(Phe) + L-phenylalanine + ATP = L-phenylalanyl-tRNA(Phe) + AMP + diphosphate + H(+). The sequence is that of Phenylalanine--tRNA ligase beta subunit from Bordetella bronchiseptica (strain ATCC BAA-588 / NCTC 13252 / RB50) (Alcaligenes bronchisepticus).